The sequence spans 300 residues: Acetylglutamate kinase (300 aa).

Residues 73–74 (GG), arginine 95, and asparagine 197 contribute to the substrate site.

This sequence belongs to the acetylglutamate kinase family. ArgB subfamily.

It localises to the cytoplasm. The catalysed reaction is N-acetyl-L-glutamate + ATP = N-acetyl-L-glutamyl 5-phosphate + ADP. Its pathway is amino-acid biosynthesis; L-arginine biosynthesis; N(2)-acetyl-L-ornithine from L-glutamate: step 2/4. Its function is as follows. Catalyzes the ATP-dependent phosphorylation of N-acetyl-L-glutamate. The chain is Acetylglutamate kinase from Bordetella avium (strain 197N).